The following is a 671-amino-acid chain: DNA ligase (671 aa).

NAD(+) is bound by residues 32–36 (DAEYD), 81–82 (SL), and Glu-113. The N6-AMP-lysine intermediate role is filled by Lys-115. The NAD(+) site is built by Arg-136, Glu-173, Lys-290, and Lys-314. Zn(2+) contacts are provided by Cys-408, Cys-411, Cys-426, and Cys-432. The region spanning 593-671 (EIDSPFAGKT…ETEMLRLLGS (79 aa)) is the BRCT domain.

Belongs to the NAD-dependent DNA ligase family. LigA subfamily. It depends on Mg(2+) as a cofactor. The cofactor is Mn(2+).

The enzyme catalyses NAD(+) + (deoxyribonucleotide)n-3'-hydroxyl + 5'-phospho-(deoxyribonucleotide)m = (deoxyribonucleotide)n+m + AMP + beta-nicotinamide D-nucleotide.. In terms of biological role, DNA ligase that catalyzes the formation of phosphodiester linkages between 5'-phosphoryl and 3'-hydroxyl groups in double-stranded DNA using NAD as a coenzyme and as the energy source for the reaction. It is essential for DNA replication and repair of damaged DNA. The sequence is that of DNA ligase from Escherichia coli O1:K1 / APEC.